A 185-amino-acid polypeptide reads, in one-letter code: Ribosome-recycling factor (185 aa).

Belongs to the RRF family.

The protein localises to the cytoplasm. In terms of biological role, responsible for the release of ribosomes from messenger RNA at the termination of protein biosynthesis. May increase the efficiency of translation by recycling ribosomes from one round of translation to another. This chain is Ribosome-recycling factor, found in Shewanella sediminis (strain HAW-EB3).